The following is a 232-amino-acid chain: Octanoyltransferase (232 aa).

One can recognise a BPL/LPL catalytic domain in the interval G33–S216. Residues R71–H78, A146–G148, and G159–A161 each bind substrate. The active-site Acyl-thioester intermediate is the C177.

This sequence belongs to the LipB family.

The protein resides in the cytoplasm. The enzyme catalyses octanoyl-[ACP] + L-lysyl-[protein] = N(6)-octanoyl-L-lysyl-[protein] + holo-[ACP] + H(+). The protein operates within protein modification; protein lipoylation via endogenous pathway; protein N(6)-(lipoyl)lysine from octanoyl-[acyl-carrier-protein]: step 1/2. Functionally, catalyzes the transfer of endogenously produced octanoic acid from octanoyl-acyl-carrier-protein onto the lipoyl domains of lipoate-dependent enzymes. Lipoyl-ACP can also act as a substrate although octanoyl-ACP is likely to be the physiological substrate. This is Octanoyltransferase from Clavibacter sepedonicus (Clavibacter michiganensis subsp. sepedonicus).